Here is a 162-residue protein sequence, read N- to C-terminus: NADH-quinone oxidoreductase subunit I (162 aa).

4Fe-4S ferredoxin-type domains follow at residues 53 to 83 (LRRY…IESE) and 93 to 122 (TRYD…ETHI). [4Fe-4S] cluster-binding residues include Cys63, Cys66, Cys69, Cys73, Cys102, Cys105, Cys108, and Cys112.

This sequence belongs to the complex I 23 kDa subunit family. In terms of assembly, NDH-1 is composed of 14 different subunits. Subunits NuoA, H, J, K, L, M, N constitute the membrane sector of the complex. It depends on [4Fe-4S] cluster as a cofactor.

It is found in the cell inner membrane. It carries out the reaction a quinone + NADH + 5 H(+)(in) = a quinol + NAD(+) + 4 H(+)(out). Its function is as follows. NDH-1 shuttles electrons from NADH, via FMN and iron-sulfur (Fe-S) centers, to quinones in the respiratory chain. The immediate electron acceptor for the enzyme in this species is believed to be ubiquinone. Couples the redox reaction to proton translocation (for every two electrons transferred, four hydrogen ions are translocated across the cytoplasmic membrane), and thus conserves the redox energy in a proton gradient. In Herminiimonas arsenicoxydans, this protein is NADH-quinone oxidoreductase subunit I.